A 402-amino-acid polypeptide reads, in one-letter code: Olfactomedin-like protein 1 (402 aa).

The signal sequence occupies residues 1-28 (MMVALRGASALLVLFLAAFLPPPQCTQD). An N-linked (GlcNAc...) asparagine glycan is attached at Asn-66. Positions 79–133 (SEYKSAVGNLALRVERAQREIDYIQYLREADECIESEDKTLAEMLLQEAEEEKKI) form a coiled coil. N-linked (GlcNAc...) asparagine glycans are attached at residues Asn-138 and Asn-183. One can recognise an Olfactomedin-like domain in the interval 140–397 (SCDNMLMGIK…QIIYKLQTKR (258 aa)). A disulfide bond links Cys-141 and Cys-324.

Post-translationally, highly N-glycosylated. As to expression, mainly expressed in the small intestine, liver, lung and heart.

The protein resides in the secreted. The chain is Olfactomedin-like protein 1 (OLFML1) from Homo sapiens (Human).